The sequence spans 806 residues: Facilitated trehalose transporter Tret1 (806 aa).

Disordered regions lie at residues 1–34 (MFGNEMDDTRDPLQYGYQRVNTGEGSLSTSTTGT) and 48–138 (LNST…HKNQ). The Cytoplasmic portion of the chain corresponds to 1–339 (MFGNEMDDTR…LEVYRPTTNP (339 aa)). Over residues 25–34 (GSLSTSTTGT) the composition is skewed to low complexity. Residues 340-360 (IFIWTQVLAALSVSLGSMVVG) traverse the membrane as a helical segment. Over 361 to 389 (FSSAYTSPALVSMKDRNITSFEVTDQSGS) the chain is Extracellular. N377 is a glycosylation site (N-linked (GlcNAc...) asparagine). Residues 390-410 (WVGGIMPLAGLAGGILGGPLI) form a helical membrane-spanning segment. The Cytoplasmic portion of the chain corresponds to 411–424 (EYLGRKNTILATAT). A helical transmembrane segment spans residues 425–445 (PFIISWLLIACATHVAMVLVG). The Extracellular segment spans residues 446-447 (RA). A helical transmembrane segment spans residues 448 to 468 (LSGFSVGVASLSLPVYLGETV). Residues 469-473 (QPEVR) lie on the Cytoplasmic side of the membrane. The helical transmembrane segment at 474–494 (GTLGLLPTAFGNIGILLCFVA) threads the bilayer. The Extracellular portion of the chain corresponds to 495 to 501 (GKYMDWS). Residues 502-522 (GLAFLGAALPIPFLLLMFLIP) form a helical membrane-spanning segment. The Cytoplasmic segment spans residues 523 to 585 (ETPRWYVSRG…DLMKKANLKP (63 aa)). Residues 586–606 (LLISLGLMFFQQLSGINAVIF) form a helical membrane-spanning segment. The Extracellular portion of the chain corresponds to 607–622 (YTVQIFQDAGSTIDEN). Residues 623–643 (LCTIIVGVVNFIATFIATMLI) form a helical membrane-spanning segment. Topologically, residues 644–649 (DRLGRK) are cytoplasmic. The chain crosses the membrane as a helical span at residues 650-670 (MLLYISDVAMIITLMTLGGFF). The Extracellular segment spans residues 671 to 681 (YVKNSGQDVSQ). The helical transmembrane segment at 682–702 (VGWLPLAAFVIYVLGFSLGFG) threads the bilayer. At 703–723 (PIPWLMMGEILPGKIRGSAAS) the chain is on the cytoplasmic side. The helical transmembrane segment at 724 to 744 (VATAFNWSCTFIVTKTFADII) threads the bilayer. Over 745–750 (NAIGTH) the chain is Extracellular. The chain crosses the membrane as a helical span at residues 751-771 (GTFWMFGSICVIGLAFVIFYV). Residues 772-806 (PETQGKSLEDIERKMMGRVRRMSSVANIKPLSFNM) lie on the Cytoplasmic side of the membrane.

It belongs to the major facilitator superfamily. Sugar transporter (TC 2.A.1.1) family. Trehalose transporter subfamily.

The protein localises to the cell membrane. High-capacity facilitative transporter for trehalose. Does not transport maltose, sucrose or lactose. Mediates the bidirectional transfer of trehalose. Responsible for the transport of trehalose synthesized in the fat body and the incorporation of trehalose into other tissues that require a carbon source, thereby regulating trehalose levels in the hemolymph. This is Facilitated trehalose transporter Tret1 from Aedes aegypti (Yellowfever mosquito).